The sequence spans 543 residues: Ribonuclease Y (543 aa).

The chain crosses the membrane as a helical span at residues 4–24; it reads IIMIPVATAIVSLLVGTVTGY. In terms of domain architecture, KH spans 233–296; it reads TVSVVDLPNE…EIAKRAMERL (64 aa). Residues 359–452 form the HD domain; sequence VLSHSIEVGK…VVAADTISSA (94 aa).

This sequence belongs to the RNase Y family.

The protein resides in the cell membrane. Its function is as follows. Endoribonuclease that initiates mRNA decay. The polypeptide is Ribonuclease Y (Lactobacillus acidophilus (strain ATCC 700396 / NCK56 / N2 / NCFM)).